A 105-amino-acid chain; its full sequence is U-scoloptoxin(16)-Sm4a (105 aa).

Residues 1 to 22 form the signal peptide; the sequence is MWALTVFVTILAAAIPITGVTG.

The protein belongs to the scoloptoxin-16 family. Contains 4 disulfide bonds. Expressed by the venom gland.

It localises to the secreted. In Scolopendra morsitans (Tanzanian blue ringleg centipede), this protein is U-scoloptoxin(16)-Sm4a.